Consider the following 369-residue polypeptide: tRNA 2-selenouridine synthase (369 aa).

The Rhodanese domain maps to 15–138 (FLNQHPMMDV…MRQYLIGVIE (124 aa)). Residue cysteine 98 is the S-selanylcysteine intermediate of the active site.

The protein belongs to the SelU family. As to quaternary structure, monomer.

The catalysed reaction is 5-methylaminomethyl-2-thiouridine(34) in tRNA + selenophosphate + (2E)-geranyl diphosphate + H2O + H(+) = 5-methylaminomethyl-2-selenouridine(34) in tRNA + (2E)-thiogeraniol + phosphate + diphosphate. It catalyses the reaction 5-methylaminomethyl-2-thiouridine(34) in tRNA + (2E)-geranyl diphosphate = 5-methylaminomethyl-S-(2E)-geranyl-thiouridine(34) in tRNA + diphosphate. The enzyme catalyses 5-methylaminomethyl-S-(2E)-geranyl-thiouridine(34) in tRNA + selenophosphate + H(+) = 5-methylaminomethyl-2-(Se-phospho)selenouridine(34) in tRNA + (2E)-thiogeraniol. It carries out the reaction 5-methylaminomethyl-2-(Se-phospho)selenouridine(34) in tRNA + H2O = 5-methylaminomethyl-2-selenouridine(34) in tRNA + phosphate. Involved in the post-transcriptional modification of the uridine at the wobble position (U34) of tRNA(Lys), tRNA(Glu) and tRNA(Gln). Catalyzes the conversion of 2-thiouridine (S2U-RNA) to 2-selenouridine (Se2U-RNA). Acts in a two-step process involving geranylation of 2-thiouridine (S2U) to S-geranyl-2-thiouridine (geS2U) and subsequent selenation of the latter derivative to 2-selenouridine (Se2U) in the tRNA chain. This chain is tRNA 2-selenouridine synthase, found in Shewanella sp. (strain W3-18-1).